The sequence spans 130 residues: Large ribosomal subunit protein bL12 (130 aa).

This sequence belongs to the bacterial ribosomal protein bL12 family. In terms of assembly, homodimer. Part of the ribosomal stalk of the 50S ribosomal subunit. Forms a multimeric L10(L12)X complex, where L10 forms an elongated spine to which 2 to 4 L12 dimers bind in a sequential fashion. Binds GTP-bound translation factors.

Its function is as follows. Forms part of the ribosomal stalk which helps the ribosome interact with GTP-bound translation factors. Is thus essential for accurate translation. The polypeptide is Large ribosomal subunit protein bL12 (Mycolicibacterium paratuberculosis (strain ATCC BAA-968 / K-10) (Mycobacterium paratuberculosis)).